Consider the following 219-residue polypeptide: MGQKINPLGFRLGTTQDHHSLWFSQPKNYSESLQEDKKIRDFIKNYVQNNMIKASGAEGIARIYIQKRIDLIQVVIFMGFPKLLIETRPQGIKELQRTLQKEFNFGNQKLNITITRIEKPYGNPNILAEFIAVQLKNRVSFRKAMKKAIELAEQADTKGIQVQIAGRVDGKEIARVEWIREGRVPRQTIRANLDYCSYPVRTIYGVLGVKIWIFLDQAK.

Residues 43–118 (IKNYVQNNMI…KLNITITRIE (76 aa)) form the KH type-2 domain.

Belongs to the universal ribosomal protein uS3 family. Part of the 30S ribosomal subunit.

The protein localises to the plastid. The protein is Small ribosomal subunit protein uS3c (rps3) of Cuscuta exaltata (Tall dodder).